The primary structure comprises 401 residues: Imidazolonepropionase (401 aa).

His-66 and His-68 together coordinate Fe(3+). Residues His-66 and His-68 each contribute to the Zn(2+) site. 3 residues coordinate 4-imidazolone-5-propanoate: Arg-75, Tyr-138, and His-171. Tyr-138 is a binding site for N-formimidoyl-L-glutamate. His-236 contacts Fe(3+). His-236 is a Zn(2+) binding site. Gln-239 lines the 4-imidazolone-5-propanoate pocket. Asp-311 serves as a coordination point for Fe(3+). Zn(2+) is bound at residue Asp-311. Residues Asn-313 and Gly-315 each coordinate N-formimidoyl-L-glutamate. Thr-316 contacts 4-imidazolone-5-propanoate.

The protein belongs to the metallo-dependent hydrolases superfamily. HutI family. Requires Zn(2+) as cofactor. The cofactor is Fe(3+).

The protein resides in the cytoplasm. The catalysed reaction is 4-imidazolone-5-propanoate + H2O = N-formimidoyl-L-glutamate. It participates in amino-acid degradation; L-histidine degradation into L-glutamate; N-formimidoyl-L-glutamate from L-histidine: step 3/3. Catalyzes the hydrolytic cleavage of the carbon-nitrogen bond in imidazolone-5-propanoate to yield N-formimidoyl-L-glutamate. It is the third step in the universal histidine degradation pathway. In Pseudomonas savastanoi pv. phaseolicola (strain 1448A / Race 6) (Pseudomonas syringae pv. phaseolicola (strain 1448A / Race 6)), this protein is Imidazolonepropionase.